Here is a 321-residue protein sequence, read N- to C-terminus: Anthranilate phosphoribosyltransferase (321 aa).

5-phospho-alpha-D-ribose 1-diphosphate contacts are provided by residues Gly-72, 75–76 (GD), Thr-80, 82–85 (NVST), 99–107 (KHGNVSITS), and Ser-111. An anthranilate-binding site is contributed by Gly-72. A Mg(2+)-binding site is contributed by Ser-84. Asn-102 contacts anthranilate. Arg-157 serves as a coordination point for anthranilate. Residues Asp-216 and Glu-217 each coordinate Mg(2+).

It belongs to the anthranilate phosphoribosyltransferase family. Homodimer. Mg(2+) serves as cofactor.

The catalysed reaction is N-(5-phospho-beta-D-ribosyl)anthranilate + diphosphate = 5-phospho-alpha-D-ribose 1-diphosphate + anthranilate. It functions in the pathway amino-acid biosynthesis; L-tryptophan biosynthesis; L-tryptophan from chorismate: step 2/5. Catalyzes the transfer of the phosphoribosyl group of 5-phosphorylribose-1-pyrophosphate (PRPP) to anthranilate to yield N-(5'-phosphoribosyl)-anthranilate (PRA). The protein is Anthranilate phosphoribosyltransferase of Methanococcus maripaludis (strain C7 / ATCC BAA-1331).